A 141-amino-acid chain; its full sequence is Cystatin (141 aa).

A signal peptide spans Met1–Met26. One can recognise a Cystatin domain in the interval Gly29–Trp129. Residues Gln73–Gly77 carry the Secondary area of contact motif. Disulfide bonds link Cys91–Cys107 and Cys120–Cys140.

The protein belongs to the cystatin family. In terms of tissue distribution, expressed at a low level by the venom gland (at protein level).

Its subcellular location is the secreted. Its function is as follows. Inhibits various C1 cysteine proteases including cathepsin L, papain and cathepsin B. This protein has no toxic activity and its function in the venom is unknown. It may play a role as a housekeeping or regulatory protein. In Pseudonaja textilis (Eastern brown snake), this protein is Cystatin.